Consider the following 196-residue polypeptide: Large ribosomal subunit protein uL6 (196 aa).

The protein belongs to the universal ribosomal protein uL6 family. As to quaternary structure, part of the 50S ribosomal subunit.

In terms of biological role, this protein binds to the 23S rRNA, and is important in its secondary structure. It is located near the subunit interface in the base of the L7/L12 stalk, and near the tRNA binding site of the peptidyltransferase center. The protein is Large ribosomal subunit protein uL6 of Archaeoglobus fulgidus (strain ATCC 49558 / DSM 4304 / JCM 9628 / NBRC 100126 / VC-16).